Here is a 394-residue protein sequence, read N- to C-terminus: General receptor for phosphoinositides 1-associated scaffold protein (394 aa).

The disordered stretch occupies residues 1–51; sequence MTLRRLRKLQQKEEATAAPDLAGRAPDSEAARAAPTPSGPPAAAAPPGAPG. Over residues 37 to 49 the composition is skewed to pro residues; sequence PSGPPAAAAPPGA. Threonine 76 carries the post-translational modification Phosphothreonine. Position 93 is a phosphoserine (serine 93). The PDZ domain occupies 100–189; it reads VLTLEKGDNQ…VLRLETLYGT (90 aa). Residues 180–257 are interaction with PSCD3; the sequence is VLRLETLYGT…GAGLLPGSLP (78 aa). Tyrosine 236 is modified (phosphotyrosine). At arginine 269 the chain carries Omega-N-methylarginine. A disordered region spans residues 293–318; the sequence is EPQALPPPPPPARAPGPGSAETPASV. Residues 296 to 306 show a composition bias toward pro residues; sequence ALPPPPPPARA. Position 386 is a phosphoserine (serine 386).

Heteromer. Composed of TAMALIN, CYTH2 and at least one GRM1. Also interacts with CYTH3, GRM2, GRM3 and GRM5. In terms of tissue distribution, expressed in brain.

Its subcellular location is the cytoplasm. The protein resides in the perinuclear region. It is found in the cell membrane. The protein localises to the postsynaptic cell membrane. Functionally, plays a role in intracellular trafficking and contributes to the macromolecular organization of group 1 metabotropic glutamate receptors (mGluRs) at synapses. The sequence is that of General receptor for phosphoinositides 1-associated scaffold protein from Rattus norvegicus (Rat).